Consider the following 397-residue polypeptide: uncharacterized protein (397 aa).

This is an uncharacterized protein from Nostoc sp. (strain PCC 7120 / SAG 25.82 / UTEX 2576).